We begin with the raw amino-acid sequence, 429 residues long: Glutamate-1-semialdehyde 2,1-aminomutase 2 (429 aa).

Lys267 carries the N6-(pyridoxal phosphate)lysine modification.

It belongs to the class-III pyridoxal-phosphate-dependent aminotransferase family. HemL subfamily. In terms of assembly, homodimer. Pyridoxal 5'-phosphate serves as cofactor.

The protein resides in the cytoplasm. The catalysed reaction is (S)-4-amino-5-oxopentanoate = 5-aminolevulinate. The protein operates within porphyrin-containing compound metabolism; protoporphyrin-IX biosynthesis; 5-aminolevulinate from L-glutamyl-tRNA(Glu): step 2/2. The protein is Glutamate-1-semialdehyde 2,1-aminomutase 2 (gsaB) of Bacillus subtilis (strain 168).